The following is a 487-amino-acid chain: L-tartrate/succinate antiporter (487 aa).

14 helical membrane-spanning segments follow: residues 10 to 30 (YLAPLAVIAIIALLPLPAGLE), 33 to 53 (TWLYFAVFTGVIVGLILEPVP), 54 to 74 (GAVVAMVGISIIAILSPWLLF), 93 to 113 (WAVSGFSNSVIWLIFAAFMFG), 137 to 157 (TLFLGYAVMFSELILAPVTPS), 189 to 209 (IGSYIMWMGIVADCVTSAIFL), 236 to 256 (FLGMLPLSILLVLLVPWLAYV), 292 to 312 (LMVGALVLWIFGGDYIDAAMV), 313 to 333 (GYSVVALMLLLRIICWDDIVS), 340 to 360 (VFFWLASLITLATGLNNTGFI), 370 to 390 (SLSGYSPTIVMVALIVVFYLL), 393 to 413 (FFASATAYTSALAPMMIAAAL), 418 to 438 (IPLPVFCLMVGAAIGLGSILT), and 462 to 482 (LGAIFGLIFLVLLVITGLLWM).

This sequence belongs to the SLC13A/DASS transporter (TC 2.A.47) family. DIT1 subfamily.

The protein resides in the cell inner membrane. It catalyses the reaction (2R,3R)-tartrate(out) + succinate(in) = (2R,3R)-tartrate(in) + succinate(out). Functionally, catalyzes the uptake of tartrate in exchange for intracellular succinate. Essential for anaerobic L-tartrate fermentation. In Escherichia coli O6:H1 (strain CFT073 / ATCC 700928 / UPEC), this protein is L-tartrate/succinate antiporter (ttdT).